Consider the following 227-residue polypeptide: Cytochrome c oxidase subunit 2 (227 aa).

The Mitochondrial intermembrane segment spans residues 1–14 (MAYPFQLGFQDATS). The chain crosses the membrane as a helical span at residues 15 to 45 (PIMEELLHFHDHALMIVFLISSLVLYLISVM). The Mitochondrial matrix portion of the chain corresponds to 46 to 59 (LTTSLTHTSTMDAQ). The chain crosses the membrane as a helical span at residues 60-87 (EVETIWTILPAMILIMIALPSLRILYMM). The Mitochondrial intermembrane portion of the chain corresponds to 88–227 (DEINNPYLTV…YFEKWSSSML (140 aa)). Residues H161, C196, E198, C200, H204, and M207 each contribute to the Cu cation site. E198 provides a ligand contact to Mg(2+). Y218 carries the phosphotyrosine modification.

Belongs to the cytochrome c oxidase subunit 2 family. Component of the cytochrome c oxidase (complex IV, CIV), a multisubunit enzyme composed of 14 subunits. The complex is composed of a catalytic core of 3 subunits MT-CO1, MT-CO2 and MT-CO3, encoded in the mitochondrial DNA, and 11 supernumerary subunits COX4I, COX5A, COX5B, COX6A, COX6B, COX6C, COX7A, COX7B, COX7C, COX8 and NDUFA4, which are encoded in the nuclear genome. The complex exists as a monomer or a dimer and forms supercomplexes (SCs) in the inner mitochondrial membrane with NADH-ubiquinone oxidoreductase (complex I, CI) and ubiquinol-cytochrome c oxidoreductase (cytochrome b-c1 complex, complex III, CIII), resulting in different assemblies (supercomplex SCI(1)III(2)IV(1) and megacomplex MCI(2)III(2)IV(2)). Found in a complex with TMEM177, COA6, COX18, COX20, SCO1 and SCO2. Interacts with TMEM177 in a COX20-dependent manner. Interacts with COX20. Interacts with COX16. Cu cation serves as cofactor.

The protein localises to the mitochondrion inner membrane. The catalysed reaction is 4 Fe(II)-[cytochrome c] + O2 + 8 H(+)(in) = 4 Fe(III)-[cytochrome c] + 2 H2O + 4 H(+)(out). Component of the cytochrome c oxidase, the last enzyme in the mitochondrial electron transport chain which drives oxidative phosphorylation. The respiratory chain contains 3 multisubunit complexes succinate dehydrogenase (complex II, CII), ubiquinol-cytochrome c oxidoreductase (cytochrome b-c1 complex, complex III, CIII) and cytochrome c oxidase (complex IV, CIV), that cooperate to transfer electrons derived from NADH and succinate to molecular oxygen, creating an electrochemical gradient over the inner membrane that drives transmembrane transport and the ATP synthase. Cytochrome c oxidase is the component of the respiratory chain that catalyzes the reduction of oxygen to water. Electrons originating from reduced cytochrome c in the intermembrane space (IMS) are transferred via the dinuclear copper A center (CU(A)) of subunit 2 and heme A of subunit 1 to the active site in subunit 1, a binuclear center (BNC) formed by heme A3 and copper B (CU(B)). The BNC reduces molecular oxygen to 2 water molecules using 4 electrons from cytochrome c in the IMS and 4 protons from the mitochondrial matrix. The sequence is that of Cytochrome c oxidase subunit 2 (MT-CO2) from Rousettus leschenaultii (Leschenault's rousette).